A 119-amino-acid chain; its full sequence is Large ribosomal subunit protein uL14 (119 aa).

This sequence belongs to the universal ribosomal protein uL14 family. As to quaternary structure, part of the 50S ribosomal subunit. Forms a cluster with proteins L3 and L19. In the 70S ribosome, L14 and L19 interact and together make contacts with the 16S rRNA in bridges B5 and B8.

In terms of biological role, binds to 23S rRNA. Forms part of two intersubunit bridges in the 70S ribosome. This Neorickettsia sennetsu (strain ATCC VR-367 / Miyayama) (Ehrlichia sennetsu) protein is Large ribosomal subunit protein uL14.